Consider the following 926-residue polypeptide: Isoleucine--tRNA ligase (926 aa).

The tract at residues 1–21 (MKMKETLQLGKTAFPMRGNLP) is disordered. A 'HIGH' region motif is present at residues 57–67 (PYANGNIHLGH). E552 serves as a coordination point for L-isoleucyl-5'-AMP. Residues 593-597 (KMSKS) carry the 'KMSKS' region motif. Residue K596 coordinates ATP. Zn(2+) contacts are provided by C886, C889, C906, and C909.

This sequence belongs to the class-I aminoacyl-tRNA synthetase family. IleS type 1 subfamily. As to quaternary structure, monomer. Zn(2+) is required as a cofactor.

The protein resides in the cytoplasm. The catalysed reaction is tRNA(Ile) + L-isoleucine + ATP = L-isoleucyl-tRNA(Ile) + AMP + diphosphate. Catalyzes the attachment of isoleucine to tRNA(Ile). As IleRS can inadvertently accommodate and process structurally similar amino acids such as valine, to avoid such errors it has two additional distinct tRNA(Ile)-dependent editing activities. One activity is designated as 'pretransfer' editing and involves the hydrolysis of activated Val-AMP. The other activity is designated 'posttransfer' editing and involves deacylation of mischarged Val-tRNA(Ile). This is Isoleucine--tRNA ligase from Enterococcus faecalis (strain ATCC 700802 / V583).